The sequence spans 166 residues: Phospholipase A2 inhibitor clone 11 (166 aa).

A signal peptide spans 1–19; sequence MRLILLSGLLLLGIFLANG. In terms of domain architecture, C-type lectin spans 46-161; it reads LKGSFLIVHK…CDDNLLVVCE (116 aa). Cystine bridges form between Cys83–Cys160 and Cys138–Cys152. Asn122 is a glycosylation site (N-linked (GlcNAc...) asparagine).

It belongs to the alpha-type phospholipase A2 inhibitor family. In terms of assembly, homotrimer; non-covalently linked. Expressed by the liver.

It is found in the secreted. This phospholipase A2 inhibitor binds directly phospholipase A2 in the presence or absence of calcium. This is Phospholipase A2 inhibitor clone 11 from Bothrops neuwiedi (Neuwied's lancehead).